The following is a 256-amino-acid chain: Adenosine 5'-phosphosulfate reductase (256 aa).

Residues Cys-120, Cys-121, Cys-203, and Cys-206 each contribute to the [4Fe-4S] cluster site. Cys-231 serves as the catalytic Nucleophile; cysteine thiosulfonate intermediate.

It belongs to the PAPS reductase family. CysH subfamily. [4Fe-4S] cluster is required as a cofactor.

It localises to the cytoplasm. The catalysed reaction is [thioredoxin]-disulfide + sulfite + AMP + 2 H(+) = adenosine 5'-phosphosulfate + [thioredoxin]-dithiol. The protein operates within sulfur metabolism; hydrogen sulfide biosynthesis; sulfite from sulfate. Functionally, catalyzes the formation of sulfite from adenosine 5'-phosphosulfate (APS) using thioredoxin as an electron donor. This chain is Adenosine 5'-phosphosulfate reductase, found in Allochromatium vinosum (strain ATCC 17899 / DSM 180 / NBRC 103801 / NCIMB 10441 / D) (Chromatium vinosum).